A 200-amino-acid polypeptide reads, in one-letter code: Putative pseudouridine methyltransferase (200 aa).

Positions 133 and 187 each coordinate S-adenosyl-L-methionine.

Belongs to the methyltransferase superfamily. TrmY family.

It is found in the cytoplasm. The polypeptide is Putative pseudouridine methyltransferase (Alcanivorax borkumensis (strain ATCC 700651 / DSM 11573 / NCIMB 13689 / SK2)).